Reading from the N-terminus, the 221-residue chain is Thymine/uracil-DNA glycosylase (221 aa).

One can recognise a HhH domain in the interval 105–133; sequence DYGGRVPRNRKAILDLPGVGKYTCAAVMC. Positions 197, 204, 207, and 213 each coordinate [4Fe-4S] cluster.

It belongs to the Nth/MutY family. Requires [4Fe-4S] cluster as cofactor.

The catalysed reaction is Hydrolyzes mismatched double-stranded DNA and polynucleotides, releasing free thymine.. Functionally, DNA glycosylase that excises thymine from T/G mismatches and uracil from U/G mismatches. Acts as a repair enzyme able to counteract the mutagenic effect of spontaneous hydrolytic deamination of DNA 5-methylcytosine (5-meC) residues that leads to the formation of T/G mismatches. May also repair U/G mismatches arising from hydrolytic deamination of DNA cytosine residues. G/G, A/G, T/C and U/C are minor substrates. In Methanothermobacter thermautotrophicus (Methanobacterium thermoformicicum), this protein is Thymine/uracil-DNA glycosylase.